The chain runs to 393 residues: Phosphoglycerate kinase (393 aa).

Substrate-binding positions include Asp-22–Asn-24, Arg-37, His-60–Arg-63, Arg-119, and Arg-152. Residues Lys-202, Gly-293, Glu-324, and Gly-350 to Ser-353 contribute to the ATP site.

Belongs to the phosphoglycerate kinase family. Monomer.

The protein localises to the cytoplasm. It catalyses the reaction (2R)-3-phosphoglycerate + ATP = (2R)-3-phospho-glyceroyl phosphate + ADP. It functions in the pathway carbohydrate degradation; glycolysis; pyruvate from D-glyceraldehyde 3-phosphate: step 2/5. This Borreliella burgdorferi (strain ZS7) (Borrelia burgdorferi) protein is Phosphoglycerate kinase.